The following is a 389-amino-acid chain: Large envelope protein (389 aa).

Methionine 1 carries the N-acetylmethionine modification. Glycine 2 carries the N-myristoyl glycine; by host lipid modification. A pre-S1 region spans residues 2–108 (GQNLSTSNPL…PPLRNTHPQA (107 aa)). The pre-S stretch occupies residues 2-163 (GQNLSTSNPL…FSRIGDPALN (162 aa)). The Virion surface; in external conformation segment spans residues 2–170 (GQNLSTSNPL…ALNMENITSG (169 aa)). Residues 2 to 242 (GQNLSTSNPL…PGYRWMCLRR (241 aa)) lie on the Intravirion; in internal conformation side of the membrane. A disordered region spans residues 76–103 (TLPANPPPASTNRQSGRQPTPLSPPLRN). Residues 85-95 (STNRQSGRQPT) are compositionally biased toward polar residues. Residues 109 to 163 (MQWNSTTFHQTLQDPRVRGLYLPAGGSSSGTVNPVPTTVSPISSIFSRIGDPALN) are pre-S2. The chain crosses the membrane as a helical span at residues 171 to 191 (FLGPLLVLQAGFFLLTKILTI). The Intravirion; in external conformation segment spans residues 192 to 242 (PKSLDSWWTSLNFLGGTTVCLGQNSQSPTSNHSPTSCPPTCPGYRWMCLRR). Residues 243–263 (FIIFLFILLLCLIFLLVLLDY) traverse the membrane as a helical segment. Residues 264 to 337 (QGMLPVCPLI…WASARFSWLS (74 aa)) lie on the Virion surface side of the membrane. Asparagine 309 carries an N-linked (GlcNAc...) asparagine; by host glycan. A helical transmembrane segment spans residues 338–358 (LLVPFVQWFVGLSPTVWLLVI). Topologically, residues 359–364 (WMMWYW) are intravirion. The helical transmembrane segment at 365–387 (GPKLFTILSPFLPLLPIFFCLWV) threads the bilayer. At 388–389 (YI) the chain is on the virion surface side.

Belongs to the orthohepadnavirus major surface antigen family. In its internal form (Li-HBsAg), interacts with the capsid protein and with the isoform S. Interacts with host chaperone CANX. In terms of assembly, associates with host chaperone CANX through its pre-S2 N glycan; this association may be essential for isoform M proper secretion. As to quaternary structure, interacts with isoform L. Interacts with the antigens of satellite virus HDV (HDVAgs); this interaction is required for encapsidation of HDV genomic RNA. Isoform M is N-terminally acetylated by host at a ratio of 90%, and N-glycosylated by host at the pre-S2 region. In terms of processing, myristoylated.

Its subcellular location is the virion membrane. The large envelope protein exists in two topological conformations, one which is termed 'external' or Le-HBsAg and the other 'internal' or Li-HBsAg. In its external conformation the protein attaches the virus to cell receptors and thereby initiating infection. This interaction determines the species specificity and liver tropism. This attachment induces virion internalization predominantly through caveolin-mediated endocytosis. The large envelope protein also assures fusion between virion membrane and endosomal membrane. In its internal conformation the protein plays a role in virion morphogenesis and mediates the contact with the nucleocapsid like a matrix protein. In terms of biological role, the middle envelope protein plays an important role in the budding of the virion. It is involved in the induction of budding in a nucleocapsid independent way. In this process the majority of envelope proteins bud to form subviral lipoprotein particles of 22 nm of diameter that do not contain a nucleocapsid. The polypeptide is Large envelope protein (Homo sapiens (Human)).